Here is a 222-residue protein sequence, read N- to C-terminus: Bone marrow proteoglycan (222 aa).

Residues 1–16 (MKLPLLLALLFGAVSA) form the signal peptide. Residues 17-105 (LHLRSETSTF…VKVVGIPGCQ (89 aa)) constitute a propeptide, acidic. T23 carries O-linked (GalNAc...) threonine; partial glycosylation. O-linked (GalNAc...) serine glycosylation is present at S24. A glycan (O-linked (GalNAc...) threonine) is linked at T25. Positions 25–75 (TFETPLGAKTLPEDEETPEQEMEETPCRELEEEEEWGSGSEDASKKDGAVE) are disordered. The O-linked (GalNAc...) threonine; partial glycan is linked to T34. Residues 37–60 (EDEETPEQEMEETPCRELEEEEEW) are compositionally biased toward acidic residues. S62 carries O-linked (Xyl...) (chondroitin sulfate) serine glycosylation. N-linked (GlcNAc...) asparagine glycosylation is present at N86. The region spanning 104–222 (CQTCRYLLVR…LRRLPFICSY (119 aa)) is the C-type lectin domain. Cystine bridges form between C125–C220 and C197–C212.

In terms of assembly, in pregnancy serum, the proform exists as a disulfide-linked 2:2 heterotetramer with PAPPA, as a disulfide-linked 2:2 heterotetramer with AGT, and as a complex (probably a 2:2:2 heterohexamer) with AGT and C3dg. Nitrated. Detected in plasma and urine (at protein level). Detected in placenta (at protein level). High levels of the proform in placenta and pregnancy serum; in placenta, localized to X cells of septa and anchoring villi. Lower levels in a variety of other tissues including kidney, myometrium, endometrium, ovaries, breast, prostate, bone marrow and colon.

Its subcellular location is the secreted. It is found in the cytoplasmic vesicle. It localises to the secretory vesicle. Functionally, cytotoxin and helminthotoxin. Also induces non-cytolytic histamine release from human basophils. Involved in antiparasitic defense mechanisms and immune hypersensitivity reactions. The proform acts as a proteinase inhibitor, reducing the activity of PAPPA. The polypeptide is Bone marrow proteoglycan (PRG2) (Homo sapiens (Human)).